We begin with the raw amino-acid sequence, 244 residues long: Phosphoadenosine 5'-phosphosulfate reductase (244 aa).

C239 serves as the catalytic Nucleophile; cysteine thiosulfonate intermediate.

The protein belongs to the PAPS reductase family. CysH subfamily.

Its subcellular location is the cytoplasm. The catalysed reaction is [thioredoxin]-disulfide + sulfite + adenosine 3',5'-bisphosphate + 2 H(+) = [thioredoxin]-dithiol + 3'-phosphoadenylyl sulfate. It functions in the pathway sulfur metabolism; hydrogen sulfide biosynthesis; sulfite from sulfate: step 3/3. Its function is as follows. Catalyzes the formation of sulfite from phosphoadenosine 5'-phosphosulfate (PAPS) using thioredoxin as an electron donor. The protein is Phosphoadenosine 5'-phosphosulfate reductase of Yersinia pseudotuberculosis serotype O:1b (strain IP 31758).